The sequence spans 117 residues: Ribonuclease P protein component (117 aa).

It belongs to the RnpA family. In terms of assembly, consists of a catalytic RNA component (M1 or rnpB) and a protein subunit.

The enzyme catalyses Endonucleolytic cleavage of RNA, removing 5'-extranucleotides from tRNA precursor.. Its function is as follows. RNaseP catalyzes the removal of the 5'-leader sequence from pre-tRNA to produce the mature 5'-terminus. It can also cleave other RNA substrates such as 4.5S RNA. The protein component plays an auxiliary but essential role in vivo by binding to the 5'-leader sequence and broadening the substrate specificity of the ribozyme. The polypeptide is Ribonuclease P protein component (Lactococcus lactis subsp. lactis (strain IL1403) (Streptococcus lactis)).